A 281-amino-acid polypeptide reads, in one-letter code: Urease accessory protein UreD 2 (281 aa).

This sequence belongs to the UreD family. UreD, UreF and UreG form a complex that acts as a GTP-hydrolysis-dependent molecular chaperone, activating the urease apoprotein by helping to assemble the nickel containing metallocenter of UreC. The UreE protein probably delivers the nickel.

The protein resides in the cytoplasm. Its function is as follows. Required for maturation of urease via the functional incorporation of the urease nickel metallocenter. In Pseudomonas syringae pv. tomato (strain ATCC BAA-871 / DC3000), this protein is Urease accessory protein UreD 2.